The following is a 170-amino-acid chain: Putative pre-16S rRNA nuclease (170 aa).

A disordered region spans residues 1–25; sequence MVPAQHRPPDRPGDPAHDPGRGRRL. The segment covering 7-21 has biased composition (basic and acidic residues); sequence RPPDRPGDPAHDPGR.

Belongs to the YqgF nuclease family.

Its subcellular location is the cytoplasm. In terms of biological role, could be a nuclease involved in processing of the 5'-end of pre-16S rRNA. In Mycobacterium tuberculosis (strain ATCC 25177 / H37Ra), this protein is Putative pre-16S rRNA nuclease.